Here is a 233-residue protein sequence, read N- to C-terminus: Putative quercetin 2,3-dioxygenase PM1685 (233 aa).

The a divalent metal cation site is built by His59, His61, His103, and Glu105.

Belongs to the pirin family. A divalent metal cation is required as a cofactor.

It catalyses the reaction quercetin + O2 = 2-(3,4-dihydroxybenzoyloxy)-4,6-dihydroxybenzoate + CO. It participates in flavonoid metabolism; quercetin degradation. Putative quercetin 2,3-dioxygenase. This Pasteurella multocida (strain Pm70) protein is Putative quercetin 2,3-dioxygenase PM1685.